We begin with the raw amino-acid sequence, 355 residues long: Protein RecA (355 aa).

65–72 (GPESSGKT) is an ATP binding site.

The protein belongs to the RecA family.

It is found in the cytoplasm. Functionally, can catalyze the hydrolysis of ATP in the presence of single-stranded DNA, the ATP-dependent uptake of single-stranded DNA by duplex DNA, and the ATP-dependent hybridization of homologous single-stranded DNAs. It interacts with LexA causing its activation and leading to its autocatalytic cleavage. The polypeptide is Protein RecA (Pseudomonas putida (Arthrobacter siderocapsulatus)).